Here is a 144-residue protein sequence, read N- to C-terminus: Large ribosomal subunit protein uL15 (144 aa).

The tract at residues 1–53 (MRLNTLSPAVGAKSAPKRVGRGIGSGLGKTAGRGHKGQKSRSGGGVRPGFEGG) is disordered. Composition is skewed to gly residues over residues 21 to 31 (RGIGSGLGKTA) and 42 to 52 (SGGGVRPGFEG).

This sequence belongs to the universal ribosomal protein uL15 family. As to quaternary structure, part of the 50S ribosomal subunit.

Its function is as follows. Binds to the 23S rRNA. The protein is Large ribosomal subunit protein uL15 of Shewanella amazonensis (strain ATCC BAA-1098 / SB2B).